The sequence spans 295 residues: Ankyrin repeat and SOCS box protein 17 (295 aa).

The stretch at 146 to 176 (SGITPLLYVAQTRQSNILKILLQYGILEREN) is one ANK repeat. An SOCS box domain is found at 232–295 (LGRRPIISNW…CLQNYLNLES (64 aa)).

The protein belongs to the ankyrin SOCS box (ASB) family.

It functions in the pathway protein modification; protein ubiquitination. Functionally, may be a substrate-recognition component of a SCF-like ECS (Elongin-Cullin-SOCS-box protein) E3 ubiquitin-protein ligase complex which mediates the ubiquitination and subsequent proteasomal degradation of target proteins. The polypeptide is Ankyrin repeat and SOCS box protein 17 (ASB17) (Bos taurus (Bovine)).